The primary structure comprises 85 residues: Translation initiation factor IF-1 (85 aa).

Residues 1–72 (MAKEELLEMR…TKARITYRFM (72 aa)) enclose the S1-like domain.

The protein belongs to the IF-1 family. In terms of assembly, component of the 30S ribosomal translation pre-initiation complex which assembles on the 30S ribosome in the order IF-2 and IF-3, IF-1 and N-formylmethionyl-tRNA(fMet); mRNA recruitment can occur at any time during PIC assembly.

It localises to the cytoplasm. In terms of biological role, one of the essential components for the initiation of protein synthesis. Stabilizes the binding of IF-2 and IF-3 on the 30S subunit to which N-formylmethionyl-tRNA(fMet) subsequently binds. Helps modulate mRNA selection, yielding the 30S pre-initiation complex (PIC). Upon addition of the 50S ribosomal subunit IF-1, IF-2 and IF-3 are released leaving the mature 70S translation initiation complex. The protein is Translation initiation factor IF-1 of Erythrobacter litoralis (strain HTCC2594).